A 100-amino-acid polypeptide reads, in one-letter code: MLHISQEFLLPISMEHWRLLITSQVIKKIGIPWKVIFHAFQNHNRGILFLQIFEHIIDFLFGEAIIYRYVLLDPKSRQVIRDSILNSFLVLYNQIKLLEK.

The protein localises to the mitochondrion. This is an uncharacterized protein from Arabidopsis thaliana (Mouse-ear cress).